The following is a 1622-amino-acid chain: FK506-binding protein 5 (1622 aa).

Residues 178 to 269 enclose the PPIase FKBP-type domain; the sequence is GDRVSIKYAG…IFDLEVTGSK (92 aa). The interval 268–306 is disordered; it reads SKKKEGSEPSLPSLNGQPSNAPQQSLPTQLFDNSPVPQD. Polar residues predominate over residues 277–303; that stretch reads SLPSLNGQPSNAPQQSLPTQLFDNSPV. At arginine 314 the chain carries Omega-N-methylarginine. 2 disordered regions span residues 320–432 and 518–538; these read RATG…GFNN and SPPPPVQQAPPPTPAPAPPPP. The segment covering 335–432 has biased composition (low complexity); that stretch reads ESNSRNSHSN…NMNNNNGFNN (98 aa). Coiled-coil stretches lie at residues 607-827 and 854-961; these read LVQT…ETER and KKEE…LESQ. 2 disordered regions span residues 1043–1097 and 1122–1622; these read KQQQ…EVVV and EEVK…VLPL. 2 stretches are compositionally biased toward acidic residues: residues 1050-1093 and 1152-1168; these read KEEE…EEEK and DDEDDDDDEDDYDDINE. Residues 1169–1182 show a composition bias toward basic and acidic residues; it reads EDLKNIDAEIEKMQ. Acidic residues-rich tracts occupy residues 1185 to 1199 and 1222 to 1260; these read MGDELEDDDDEEEEK and ESEEEEEEETKVEVPVLEEEKEEEETKVEVPVLEDEQED. Residues 1261 to 1271 are compositionally biased toward basic and acidic residues; sequence KVESDVEEKIV. A compositionally biased stretch (acidic residues) spans 1320-1335; the sequence is DDDEDNEKDVASDSEE. Over residues 1353–1369 the composition is skewed to basic and acidic residues; it reads EEKVVEQVKEEINETKF. Over residues 1380–1412 the composition is skewed to acidic residues; the sequence is TTTEEKEEEKEEEKVEEEEEKVVEPPTIDDDET. Composition is skewed to low complexity over residues 1435-1449 and 1465-1504; these read STTAATTSTTTTSST and KTSFFDFDDSPFSAETETETKSTAASSDPFADTTSSTPTS. Polar residues-rich tracts occupy residues 1519–1532 and 1581–1609; these read FGNSSDIFDKPSTT and AKSNNNTPSRQKQDFSSLFGSDPTISPLT.

It belongs to the FKBP-type PPIase family.

The enzyme catalyses [protein]-peptidylproline (omega=180) = [protein]-peptidylproline (omega=0). With respect to regulation, inhibited by both FK506 and rapamycin. PPIases accelerate the folding of proteins by catalyzing the cis-trans isomerization of proline imidic peptide bonds in oligopeptides. This chain is FK506-binding protein 5 (fkbp5), found in Dictyostelium discoideum (Social amoeba).